We begin with the raw amino-acid sequence, 119 residues long: Ribosome-binding factor A (119 aa).

Belongs to the RbfA family. In terms of assembly, monomer. Binds 30S ribosomal subunits, but not 50S ribosomal subunits or 70S ribosomes.

It is found in the cytoplasm. Functionally, one of several proteins that assist in the late maturation steps of the functional core of the 30S ribosomal subunit. Associates with free 30S ribosomal subunits (but not with 30S subunits that are part of 70S ribosomes or polysomes). Required for efficient processing of 16S rRNA. May interact with the 5'-terminal helix region of 16S rRNA. The sequence is that of Ribosome-binding factor A from Pelodictyon phaeoclathratiforme (strain DSM 5477 / BU-1).